Here is a 226-residue protein sequence, read N- to C-terminus: 6-carboxyhexanoate--CoA ligase (226 aa).

The protein belongs to the BioW family. As to quaternary structure, homodimer. Requires Mg(2+) as cofactor.

The enzyme catalyses heptanedioate + ATP + CoA = 6-carboxyhexanoyl-CoA + AMP + diphosphate. It functions in the pathway metabolic intermediate metabolism; pimeloyl-CoA biosynthesis; pimeloyl-CoA from pimelate: step 1/1. Its function is as follows. Catalyzes the transformation of pimelate into pimeloyl-CoA with concomitant hydrolysis of ATP to AMP. The sequence is that of 6-carboxyhexanoate--CoA ligase from Methanocaldococcus infernus (strain DSM 11812 / JCM 15783 / ME).